A 306-amino-acid polypeptide reads, in one-letter code: MALIAGPTASGKSALAVALAKALGNGTVVNADASQVYADLAILSARPTDDEMQGVPHRLFGHVDGSQAHNAARWADEAQGVIAQAHAAGRVPILVGGTGLYLRTLLYGIAPVPEIDPHIREAVRALPVAQAHAALAEADPAAAARLGPADTTRVARALEVVRSTGRTLASWQQAREGGIADRVALAPLVLLPPRDWLRDRCDVRLVEMFDGGAIDEVEALLARGLDPDLPVMRAIGVPQIAAFLDGTASRDEALAAAQAATRQYAKRQFTWFRHQPPASWPRHIESLSIDIIDNLAIKLRETVLTR.

6-13 serves as a coordination point for ATP; sequence GPTASGKS. 8 to 13 is a binding site for substrate; it reads TASGKS.

Belongs to the IPP transferase family. In terms of assembly, monomer. Mg(2+) serves as cofactor.

The enzyme catalyses adenosine(37) in tRNA + dimethylallyl diphosphate = N(6)-dimethylallyladenosine(37) in tRNA + diphosphate. Functionally, catalyzes the transfer of a dimethylallyl group onto the adenine at position 37 in tRNAs that read codons beginning with uridine, leading to the formation of N6-(dimethylallyl)adenosine (i(6)A). The polypeptide is tRNA dimethylallyltransferase (Sphingopyxis alaskensis (strain DSM 13593 / LMG 18877 / RB2256) (Sphingomonas alaskensis)).